A 203-amino-acid polypeptide reads, in one-letter code: FMN-dependent NADH:quinone oxidoreductase (203 aa).

Residues Ser-9, 15-17 (SVS), and 139-142 (TRGG) each bind FMN.

Belongs to the azoreductase type 1 family. As to quaternary structure, homodimer. FMN is required as a cofactor.

The enzyme catalyses 2 a quinone + NADH + H(+) = 2 a 1,4-benzosemiquinone + NAD(+). It carries out the reaction N,N-dimethyl-1,4-phenylenediamine + anthranilate + 2 NAD(+) = 2-(4-dimethylaminophenyl)diazenylbenzoate + 2 NADH + 2 H(+). In terms of biological role, quinone reductase that provides resistance to thiol-specific stress caused by electrophilic quinones. Its function is as follows. Also exhibits azoreductase activity. Catalyzes the reductive cleavage of the azo bond in aromatic azo compounds to the corresponding amines. The chain is FMN-dependent NADH:quinone oxidoreductase from Albidiferax ferrireducens (strain ATCC BAA-621 / DSM 15236 / T118) (Rhodoferax ferrireducens).